Reading from the N-terminus, the 134-residue chain is UPF0357 protein AAL017W (134 aa).

The first 23 residues, 1–23 (MFGLISLWHLFWLAVMAGILVVA), serve as a signal peptide directing secretion.

The protein belongs to the UPF0357 family.

The sequence is that of UPF0357 protein AAL017W from Eremothecium gossypii (strain ATCC 10895 / CBS 109.51 / FGSC 9923 / NRRL Y-1056) (Yeast).